The chain runs to 133 residues: Holo-[acyl-carrier-protein] synthase (133 aa).

Residues Asp8 and Glu57 each coordinate Mg(2+).

This sequence belongs to the P-Pant transferase superfamily. AcpS family. It depends on Mg(2+) as a cofactor.

The protein resides in the cytoplasm. It catalyses the reaction apo-[ACP] + CoA = holo-[ACP] + adenosine 3',5'-bisphosphate + H(+). Transfers the 4'-phosphopantetheine moiety from coenzyme A to a Ser of acyl-carrier-protein. The protein is Holo-[acyl-carrier-protein] synthase of Bartonella tribocorum (strain CIP 105476 / IBS 506).